Consider the following 159-residue polypeptide: Adult-specific rigid cuticular protein 15.7 (159 aa).

The 67-residue stretch at 23–89 (LGNYAFNYGI…SIKTNEPGTA (67 aa)) folds into the Chitin-binding type R&amp;R domain.

Component of the rigid cuticle of the spider. The chain is Adult-specific rigid cuticular protein 15.7 from Araneus diadematus (European garden spider).